We begin with the raw amino-acid sequence, 193 residues long: Peptidyl-tRNA hydrolase (193 aa).

Y14 provides a ligand contact to tRNA. H19 serves as the catalytic Proton acceptor. TRNA contacts are provided by F64, N66, and N112.

Belongs to the PTH family. Monomer.

The protein localises to the cytoplasm. It catalyses the reaction an N-acyl-L-alpha-aminoacyl-tRNA + H2O = an N-acyl-L-amino acid + a tRNA + H(+). In terms of biological role, hydrolyzes ribosome-free peptidyl-tRNAs (with 1 or more amino acids incorporated), which drop off the ribosome during protein synthesis, or as a result of ribosome stalling. Its function is as follows. Catalyzes the release of premature peptidyl moieties from peptidyl-tRNA molecules trapped in stalled 50S ribosomal subunits, and thus maintains levels of free tRNAs and 50S ribosomes. The chain is Peptidyl-tRNA hydrolase from Bartonella quintana (strain Toulouse) (Rochalimaea quintana).